Reading from the N-terminus, the 255-residue chain is uncharacterized protein (255 aa).

This sequence belongs to the methyltransferase superfamily.

This is an uncharacterized protein from Mycobacterium marinum (strain ATCC BAA-535 / M).